The chain runs to 75 residues: Large ribosomal subunit protein bL31 (75 aa).

Zn(2+) is bound by residues Cys16, Cys18, Cys37, and Cys40.

The protein belongs to the bacterial ribosomal protein bL31 family. Type A subfamily. As to quaternary structure, part of the 50S ribosomal subunit. The cofactor is Zn(2+).

Binds the 23S rRNA. This chain is Large ribosomal subunit protein bL31, found in Nitrosospira multiformis (strain ATCC 25196 / NCIMB 11849 / C 71).